We begin with the raw amino-acid sequence, 281 residues long: Bifunctional protein FolD (281 aa).

Residues 165–167 (GRG), Thr192, and Val233 each bind NADP(+).

This sequence belongs to the tetrahydrofolate dehydrogenase/cyclohydrolase family. As to quaternary structure, homodimer.

The enzyme catalyses (6R)-5,10-methylene-5,6,7,8-tetrahydrofolate + NADP(+) = (6R)-5,10-methenyltetrahydrofolate + NADPH. The catalysed reaction is (6R)-5,10-methenyltetrahydrofolate + H2O = (6R)-10-formyltetrahydrofolate + H(+). Its pathway is one-carbon metabolism; tetrahydrofolate interconversion. Catalyzes the oxidation of 5,10-methylenetetrahydrofolate to 5,10-methenyltetrahydrofolate and then the hydrolysis of 5,10-methenyltetrahydrofolate to 10-formyltetrahydrofolate. The chain is Bifunctional protein FolD from Corynebacterium diphtheriae (strain ATCC 700971 / NCTC 13129 / Biotype gravis).